A 179-amino-acid chain; its full sequence is UPF0227 protein SO_2251 (179 aa).

This sequence belongs to the UPF0227 family.

The protein is UPF0227 protein SO_2251 of Shewanella oneidensis (strain ATCC 700550 / JCM 31522 / CIP 106686 / LMG 19005 / NCIMB 14063 / MR-1).